Reading from the N-terminus, the 100-residue chain is Large ribosomal subunit protein bL21 (100 aa).

It belongs to the bacterial ribosomal protein bL21 family. As to quaternary structure, part of the 50S ribosomal subunit. Contacts protein L20.

Its function is as follows. This protein binds to 23S rRNA in the presence of protein L20. The sequence is that of Large ribosomal subunit protein bL21 from Mycoplasma mycoides subsp. mycoides SC (strain CCUG 32753 / NCTC 10114 / PG1).